The chain runs to 165 residues: ATP synthase subunit b (165 aa).

Residues L5–L25 traverse the membrane as a helical segment.

It belongs to the ATPase B chain family. F-type ATPases have 2 components, F(1) - the catalytic core - and F(0) - the membrane proton channel. F(1) has five subunits: alpha(3), beta(3), gamma(1), delta(1), epsilon(1). F(0) has three main subunits: a(1), b(2) and c(10-14). The alpha and beta chains form an alternating ring which encloses part of the gamma chain. F(1) is attached to F(0) by a central stalk formed by the gamma and epsilon chains, while a peripheral stalk is formed by the delta and b chains.

It localises to the cell membrane. In terms of biological role, f(1)F(0) ATP synthase produces ATP from ADP in the presence of a proton or sodium gradient. F-type ATPases consist of two structural domains, F(1) containing the extramembraneous catalytic core and F(0) containing the membrane proton channel, linked together by a central stalk and a peripheral stalk. During catalysis, ATP synthesis in the catalytic domain of F(1) is coupled via a rotary mechanism of the central stalk subunits to proton translocation. Functionally, component of the F(0) channel, it forms part of the peripheral stalk, linking F(1) to F(0). The polypeptide is ATP synthase subunit b (Clostridioides difficile (strain 630) (Peptoclostridium difficile)).